Consider the following 202-residue polypeptide: Putative zinc finger protein ZK686.5 (202 aa).

A disordered region spans residues 43–63 (RKNVDNTSTRKPYSYKDRKRK). C2H2-type zinc fingers lie at residues 110-133 (TYCELCEQNFSSSKMLLLHRGKVH), 138-160 (IECHLCMKLFSQTIQFNRHMKTH), and 169-192 (VQCELCDRQFKDKQSLRTHWDVSH).

It localises to the nucleus. In Caenorhabditis elegans, this protein is Putative zinc finger protein ZK686.5.